The chain runs to 233 residues: Ribosome maturation factor RimP (233 aa).

Residues 167–179 are compositionally biased toward basic and acidic residues; it reads RGKAAEREKKRDL. A disordered region spans residues 167-233; it reads RGKAAEREKK…RARRGEIDPD (67 aa). Over residues 187–196 the composition is skewed to low complexity; the sequence is PHAKPAAQAK. Positions 220–233 are enriched in basic and acidic residues; that stretch reads LAADRARRGEIDPD.

Belongs to the RimP family.

The protein resides in the cytoplasm. Required for maturation of 30S ribosomal subunits. This chain is Ribosome maturation factor RimP, found in Bradyrhizobium sp. (strain ORS 278).